Reading from the N-terminus, the 676-residue chain is DNA ligase (676 aa).

Residues 32 to 36 (DAEYD), 81 to 82 (SL), and Glu-113 each bind NAD(+). Lys-115 serves as the catalytic N6-AMP-lysine intermediate. Residues Arg-136, Glu-173, Lys-291, and Lys-315 each contribute to the NAD(+) site. Residues Cys-409, Cys-412, Cys-427, and Cys-433 each coordinate Zn(2+). One can recognise a BRCT domain in the interval 595 to 676 (SEKTYFFNKK…LNSLIRIKEQ (82 aa)).

This sequence belongs to the NAD-dependent DNA ligase family. LigA subfamily. Requires Mg(2+) as cofactor. It depends on Mn(2+) as a cofactor.

It carries out the reaction NAD(+) + (deoxyribonucleotide)n-3'-hydroxyl + 5'-phospho-(deoxyribonucleotide)m = (deoxyribonucleotide)n+m + AMP + beta-nicotinamide D-nucleotide.. DNA ligase that catalyzes the formation of phosphodiester linkages between 5'-phosphoryl and 3'-hydroxyl groups in double-stranded DNA using NAD as a coenzyme and as the energy source for the reaction. It is essential for DNA replication and repair of damaged DNA. In Buchnera aphidicola subsp. Acyrthosiphon pisum (strain Tuc7), this protein is DNA ligase.